We begin with the raw amino-acid sequence, 185 residues long: Hypoxanthine/guanine phosphoribosyltransferase (185 aa).

This sequence belongs to the purine/pyrimidine phosphoribosyltransferase family. Archaeal HPRT subfamily. As to quaternary structure, homodimer.

Its subcellular location is the cytoplasm. The catalysed reaction is IMP + diphosphate = hypoxanthine + 5-phospho-alpha-D-ribose 1-diphosphate. The enzyme catalyses GMP + diphosphate = guanine + 5-phospho-alpha-D-ribose 1-diphosphate. Its pathway is purine metabolism; IMP biosynthesis via salvage pathway; IMP from hypoxanthine: step 1/1. In terms of biological role, catalyzes a salvage reaction resulting in the formation of IMP that is energically less costly than de novo synthesis. This chain is Hypoxanthine/guanine phosphoribosyltransferase, found in Aciduliprofundum boonei (strain DSM 19572 / T469).